The sequence spans 155 residues: Large ribosomal subunit protein eL24 (155 aa).

A compositionally biased stretch (basic and acidic residues) spans 94-129 (RSLKPEVRKAQRDEKKKADKEKKKADKAARKSEKAK). The tract at residues 94-155 (RSLKPEVRKA…AFQKVAATSR (62 aa)) is disordered.

This sequence belongs to the eukaryotic ribosomal protein eL24 family.

This Kluyveromyces lactis (strain ATCC 8585 / CBS 2359 / DSM 70799 / NBRC 1267 / NRRL Y-1140 / WM37) (Yeast) protein is Large ribosomal subunit protein eL24 (RPL24).